The sequence spans 47 residues: MKKFRWVVLVVVVLACLLLWAQVFNMMCDQDVQFFSGICAINQFIPW.

Residues 6-26 form a helical membrane-spanning segment; that stretch reads WVVLVVVVLACLLLWAQVFNM.

Belongs to the MgrB family. As to quaternary structure, may form homooligomers. Probably interacts with the periplasmic domain of PhoQ.

The protein resides in the cell inner membrane. PhoP-regulated transcription is redox-sensitive, being activated when the periplasm becomes more reducing. MgrB acts between DsbA/DsbB and PhoP/PhoQ in this pathway. Represses PhoP/PhoQ signaling, possibly by binding to the periplasmic domain of PhoQ, altering its activity and that of downstream effector PhoP. This chain is PhoP/PhoQ regulator MgrB, found in Escherichia coli O157:H7.